Reading from the N-terminus, the 231-residue chain is Nuclear transcription factor Y subunit C-9 (231 aa).

Residues 211–231 are disordered; it reads NPYMGQPMWQQQAPDQPDQEN.

It belongs to the NFYC/HAP5 subunit family. In terms of assembly, heterotrimeric transcription factor composed of three components, NF-YA, NF-YB and NF-YC. Interacts with NFYA2, NFYB2, CO and RGA. Interacts with REF6 (via N-terminus). Ubiquitous. Present in etiolated seedlings.

The protein localises to the nucleus. In terms of biological role, stimulates the transcription of various genes by recognizing and binding to a CCAAT motif in promoters. Interacts with REF6 to directly regulate SOC1 transcription in response to flowering signals from photoperiod and gibberellic acid pathways. The protein is Nuclear transcription factor Y subunit C-9 (NFYC9) of Arabidopsis thaliana (Mouse-ear cress).